The chain runs to 398 residues: Galactose-3-O-sulfotransferase 2 (398 aa).

Over 1-11 (MLSALGGLQRC) the chain is Cytoplasmic. Residues 12–29 (FWAILLLALTVSLLAGFL) form a helical; Signal-anchor for type II membrane protein membrane-spanning segment. Residues 30 to 398 (HKDVRLLMPL…PPKNIPFLGA (369 aa)) are Lumenal-facing. Residues N77, N133, N180, N288, N330, and N360 are each glycosylated (N-linked (GlcNAc...) asparagine).

This sequence belongs to the galactose-3-O-sulfotransferase family.

It localises to the golgi apparatus. The protein localises to the golgi stack membrane. Its pathway is protein modification; carbohydrate sulfation. Its activity is regulated as follows. Strongly inhibited by Cu(2+) and Zn(2+). Transfers a sulfate group to the hydroxyl group at C3 of non-reducing beta-galactosyl residues. Acts both on type 1 (Gal-beta-1,3-GlcNAc) and type 2 (Gal-beta-1,4-GlcNAc) chains with similar efficiency. The protein is Galactose-3-O-sulfotransferase 2 (GAL3ST2) of Sus scrofa (Pig).